The primary structure comprises 139 residues: Large ribosomal subunit protein uL16 (139 aa).

This sequence belongs to the universal ribosomal protein uL16 family. As to quaternary structure, part of the 50S ribosomal subunit.

Functionally, binds 23S rRNA and is also seen to make contacts with the A and possibly P site tRNAs. This Parvibaculum lavamentivorans (strain DS-1 / DSM 13023 / NCIMB 13966) protein is Large ribosomal subunit protein uL16.